Reading from the N-terminus, the 130-residue chain is DNA-directed RNA polymerase subunit omega (130 aa).

The interval 109-130 (EEELLKGLEGLAPPEEQPEEDE) is disordered.

This sequence belongs to the RNA polymerase subunit omega family. As to quaternary structure, the RNAP catalytic core consists of 2 alpha, 1 beta, 1 beta' and 1 omega subunit. When a sigma factor is associated with the core the holoenzyme is formed, which can initiate transcription.

It catalyses the reaction RNA(n) + a ribonucleoside 5'-triphosphate = RNA(n+1) + diphosphate. Its function is as follows. Promotes RNA polymerase assembly. Latches the N- and C-terminal regions of the beta' subunit thereby facilitating its interaction with the beta and alpha subunits. The sequence is that of DNA-directed RNA polymerase subunit omega from Rhodopseudomonas palustris (strain BisB5).